The primary structure comprises 121 residues: Putative iron-sulfur cluster insertion protein ErpA (121 aa).

C49, C113, and C115 together coordinate iron-sulfur cluster.

The protein belongs to the HesB/IscA family. In terms of assembly, homodimer. Iron-sulfur cluster is required as a cofactor.

Required for insertion of 4Fe-4S clusters. This chain is Putative iron-sulfur cluster insertion protein ErpA, found in Paracidovorax citrulli (strain AAC00-1) (Acidovorax citrulli).